The primary structure comprises 171 residues: uncharacterized protein (171 aa).

This sequence belongs to the IUNH family.

This is an uncharacterized protein from Acidianus ambivalens (Desulfurolobus ambivalens).